A 268-amino-acid chain; its full sequence is MADS-box protein FBP24 (268 aa).

An MADS-box domain is found at 4 to 64 (MGRGKIEVKR…GKLFEYCSQP (61 aa)). The K-box domain maps to 88-178 (RVQLYDEVAK…YQWLMNNQMY (91 aa)). The disordered stretch occupies residues 243-268 (NSISPYRLQPSHPNLQDSHVHGPSYD).

It localises to the nucleus. Probable transcription factor. The chain is MADS-box protein FBP24 (FBP24) from Petunia hybrida (Petunia).